The sequence spans 483 residues: Cobyric acid synthase (483 aa).

A GATase cobBQ-type domain is found at 248–435; it reads VLKVVVPVLP…LHGLFETAAA (188 aa). Catalysis depends on C329, which acts as the Nucleophile. H427 is a catalytic residue.

The protein belongs to the CobB/CobQ family. CobQ subfamily.

It functions in the pathway cofactor biosynthesis; adenosylcobalamin biosynthesis. Its function is as follows. Catalyzes amidations at positions B, D, E, and G on adenosylcobyrinic A,C-diamide. NH(2) groups are provided by glutamine, and one molecule of ATP is hydrogenolyzed for each amidation. The chain is Cobyric acid synthase from Pseudomonas fluorescens (strain SBW25).